A 245-amino-acid chain; its full sequence is Probable 2-phosphosulfolactate phosphatase (245 aa).

Belongs to the ComB family. It depends on Mg(2+) as a cofactor.

It catalyses the reaction (2R)-O-phospho-3-sulfolactate + H2O = (2R)-3-sulfolactate + phosphate. This is Probable 2-phosphosulfolactate phosphatase from Nostoc sp. (strain PCC 7120 / SAG 25.82 / UTEX 2576).